Reading from the N-terminus, the 432-residue chain is Fibrinogen gamma chain (432 aa).

The first 24 residues, 1–24 (MGRIGTPVFLAFLSALTCSLQVHA), serve as a signal peptide directing secretion. In terms of domain architecture, Fibrinogen C-terminal spans 169–412 (KISPITGKDC…MTTMKLLPMG (244 aa)). The cysteines at positions 178 and 207 are disulfide-linked. A glycan (N-linked (GlcNAc...) asparagine) is linked at Asn227. Residues Asp340, Asp342, Tyr344, and Gly346 each coordinate Ca(2+). A disulfide bond links Cys348 and Cys361. Residues 413-432 (RDLSGHGGQQQSKGNSRGDN) form a disordered region. Positions 421 to 432 (QQQSKGNSRGDN) are enriched in polar residues.

In terms of assembly, heterohexamer; disulfide linked. Contains 2 sets of 3 non-identical chains (alpha, beta and gamma). The 2 heterotrimers are in head to head conformation with the N-termini in a small central domain. Conversion of fibrinogen to fibrin is triggered by thrombin, which cleaves fibrinopeptides A and B from alpha and beta chains, and thus exposes the N-terminal polymerization sites responsible for the formation of the soft clot. The soft clot is converted into the hard clot by factor XIIIA which catalyzes the epsilon-(gamma-glutamyl)lysine cross-linking between gamma chains (stronger) and between alpha chains (weaker) of different monomers.

The protein localises to the secreted. Together with fibrinogen alpha (FGA) and fibrinogen beta (FGB), polymerizes to form an insoluble fibrin matrix. Has a major function in hemostasis as one of the primary components of blood clots. This chain is Fibrinogen gamma chain (FGG), found in Petromyzon marinus (Sea lamprey).